The chain runs to 223 residues: Endonuclease NucS (223 aa).

The protein belongs to the NucS endonuclease family.

The protein localises to the cytoplasm. Functionally, cleaves both 3' and 5' ssDNA extremities of branched DNA structures. This is Endonuclease NucS from Mycolicibacterium gilvum (strain PYR-GCK) (Mycobacterium gilvum (strain PYR-GCK)).